The sequence spans 563 residues: Autotransporter BimA (563 aa).

The disordered stretch occupies residues 1–20 (MKYRRLSLAHARQDSGQAAS). Residues 1–48 (MKYRRLSLAHARQDSGQAASNARSRRFARLLCSSIAPLALGFSADAFA) form the signal peptide. The tract at residues 61–472 (APNDAHGNLL…NLAISNSNAY (412 aa)) is surface exposed passenger domain. A WH2 domain is found at 65–82 (AHGNLLDEIRRGVPLRHV). A central and acidic domains region spans residues 96–130 (TLADAMRRVIDSRRTAFDSPPATPASPSPSWSDDE). Positions 109-350 (RTAFDSPPAT…PARPGGGQFT (242 aa)) are disordered. Low complexity-rich tracts occupy residues 138 to 150 (ATRP…SAAR), 162 to 197 (PASA…STPR), and 211 to 227 (SPAA…AHSR). Composition is skewed to polar residues over residues 228–238 (GSTQPPSNLST) and 269–281 (SRGS…NLST). The interval 473-509 (TNQRIGDLQQSITETARDAYSGVAAATALTMIPDVDR) is outer membrane translocation of the passenger domain. 4 beta stranded membrane passes run 510–519 (DKMLSIGVGG), 525–536 (HRAVALGGTARI), 543–549 (RAGVAMS), and 553–563 (NTVGVGMSWQW). The interval 510–563 (DKMLSIGVGGAVYKGHRAVALGGTARIGENLKVRAGVAMSAGGNTVGVGMSWQW) is translocator domain.

The protein belongs to the autotransporter-2 (AT-2) (TC 1.B.40) family. As to quaternary structure, homotrimer. Interacts with host G-actin; the interaction is direct. Interacts (via central and acidic domains) with host ACTR2/ARP2 and ACTR3/ARP3.

It localises to the cell outer membrane. The protein localises to the cell surface. In terms of biological role, during host cell infection, required for actin-based intracellular motility. Mediates actin tail formation at one pole of the bacteria surface by recruiting host Arp2/3 (ACTR3/ARP3-ACTR2/ARP2) which leads to actin polymerization which provides the propulsive force for intracellular movement and intercellular dissemination of the bacterium. This chain is Autotransporter BimA, found in Burkholderia thailandensis (strain ATCC 700388 / DSM 13276 / CCUG 48851 / CIP 106301 / E264).